The sequence spans 786 residues: LPS-assembly protein LptD (786 aa).

An N-terminal signal peptide occupies residues 1 to 39 (MPPKPLFPNVFPGDGAPRKRRLALALLAVPGLVPAVSYA). The segment at 767-786 (PGYTPLPPPPPPMSRFSNYE) is disordered. Over residues 770–779 (TPLPPPPPPM) the composition is skewed to pro residues.

The protein belongs to the LptD family. Component of the lipopolysaccharide transport and assembly complex. Interacts with LptE and LptA.

The protein localises to the cell outer membrane. In terms of biological role, together with LptE, is involved in the assembly of lipopolysaccharide (LPS) at the surface of the outer membrane. The protein is LPS-assembly protein LptD of Burkholderia lata (strain ATCC 17760 / DSM 23089 / LMG 22485 / NCIMB 9086 / R18194 / 383).